The primary structure comprises 322 residues: Thioredoxin reductase (322 aa).

FAD is bound by residues 12-15, 34-42, asparagine 51, and valine 84; these read SGPA and EGAVTAGGA. Cysteines 136 and 139 form a disulfide. NADP(+) is bound by residues histidine 176, arginine 182, and tyrosine 259. FAD contacts are provided by residues aspartate 279 and 286–289; that span reads RQAI. Arginine 286 is an NADP(+) binding site.

Belongs to the class-II pyridine nucleotide-disulfide oxidoreductase family. Homodimer. Requires FAD as cofactor.

It catalyses the reaction [thioredoxin]-dithiol + NADP(+) = [thioredoxin]-disulfide + NADPH + H(+). In terms of biological role, component of the thioredoxin-thioredoxin reductase system which may be involved in biosynthesis of penicillins and cephalosporins and may be important in determining the thiol-disulfide redox balance. The polypeptide is Thioredoxin reductase (Streptomyces clavuligerus).